The following is a 264-amino-acid chain: Sec-independent protein translocase protein TatC (264 aa).

Helical transmembrane passes span 20 to 40, 85 to 105, 131 to 151, 175 to 195, 211 to 231, and 232 to 252; these read VVVI…EPAE, FFAQ…PVAV, AVGL…PYIL, FVLQ…VMFA, IRYA…DGSG, and VTMW…MFFA.

This sequence belongs to the TatC family. In terms of assembly, forms a complex with TatA.

The protein resides in the cell membrane. Part of the twin-arginine translocation (Tat) system that transports large folded proteins containing a characteristic twin-arginine motif in their signal peptide across membranes. The protein is Sec-independent protein translocase protein TatC of Cenarchaeum symbiosum (strain A).